The primary structure comprises 332 residues: Succinylglutamate desuccinylase (332 aa).

The Zn(2+) site is built by His-59, Glu-62, and His-151. Glu-215 is a catalytic residue.

This sequence belongs to the AspA/AstE family. Succinylglutamate desuccinylase subfamily. Zn(2+) is required as a cofactor.

It carries out the reaction N-succinyl-L-glutamate + H2O = L-glutamate + succinate. It participates in amino-acid degradation; L-arginine degradation via AST pathway; L-glutamate and succinate from L-arginine: step 5/5. Transforms N(2)-succinylglutamate into succinate and glutamate. The protein is Succinylglutamate desuccinylase of Pseudomonas aeruginosa (strain LESB58).